The primary structure comprises 477 residues: Protoporphyrinogen oxidase (477 aa).

FAD is bound by residues 9–14, W42, 57–60, V257, A449, and 454–456; these read GGGISG, GPRG, and VAV.

This sequence belongs to the protoporphyrinogen/coproporphyrinogen oxidase family. Protoporphyrinogen oxidase subfamily. Monomer. Homodimer. It depends on FAD as a cofactor. In terms of tissue distribution, detected in liver (at protein level).

It localises to the mitochondrion inner membrane. It catalyses the reaction protoporphyrinogen IX + 3 O2 = protoporphyrin IX + 3 H2O2. It participates in porphyrin-containing compound metabolism; protoporphyrin-IX biosynthesis; protoporphyrin-IX from protoporphyrinogen-IX: step 1/1. In terms of biological role, catalyzes the 6-electron oxidation of protoporphyrinogen-IX to form protoporphyrin-IX. This is Protoporphyrinogen oxidase (PPOX) from Bos taurus (Bovine).